The following is a 728-amino-acid chain: Protein Hook homolog 1 (728 aa).

M1 is modified (N-acetylmethionine). A sufficient for interaction with microtubules region spans residues 1-555 (MEETQPPPQP…LKQKLEAHME (555 aa)). Residues 12–128 (LPLCDSLMIW…RLLQLILGCA (117 aa)) form the Calponin-homology (CH) domain. 2 coiled-coil regions span residues 169-434 (PNDA…RCSQ) and 477-658 (LRLQ…AKFR). Positions 169 to 444 (PNDAVGELEQ…VQQDHLNQTD (276 aa)) are sufficient for homodimerization, interaction wit HOOK2, HOOK3 and AP4M1. Position 235 is a phosphoserine (S235). The segment at 481-512 (QEGSENERIEELQEQLEQKHRKMNELETEQRL) is disordered. Residues 503 to 512 (MNELETEQRL) show a composition bias toward basic and acidic residues. A sufficient for interaction with AKTIP and VPS18 region spans residues 657–728 (FRDYEEKLIV…SVKVPATTSD (72 aa)). T699 is modified (phosphothreonine). A phosphoserine mark is found at S719 and S727.

It belongs to the hook family. Self-associates. Component of the FTS/Hook/FHIP complex (FHF complex), composed of AKTIP/FTS, FHIP1B, and one or more members of the Hook family of proteins HOOK1, HOOK2, and HOOK3. Interacts directly with AKTIP/FTS, HOOK2 and HOOK3. Associates with several subunits of the homotypic vesicular sorting complex (the HOPS complex) including VPS16, VPS18, VPS39 and VPS41; these interactions may be indirect. Interacts with CCDC181. Interacts (via coiled-coil region) with RIMBP3 (via C-terminus). Interacts with LRGUK (via guanylate kinase-like domain). Interacts with microtubules. May interact with CLN3. Interacts with AP4M1; the interaction is direct, mediates the interaction between FTS-Hook-FHIP (FHF) complex and AP-4 and the perinuclear distribution of AP-4.

The protein resides in the cytoplasm. It is found in the cytoskeleton. Component of the FTS/Hook/FHIP complex (FHF complex). The FHF complex may function to promote vesicle trafficking and/or fusion via the homotypic vesicular protein sorting complex (the HOPS complex). FHF complex promotes the distribution of AP-4 complex to the perinuclear area of the cell. Required for spermatid differentiation. Probably involved in the positioning of the microtubules of the manchette and the flagellum in relation to the membrane skeleton. This chain is Protein Hook homolog 1, found in Homo sapiens (Human).